Reading from the N-terminus, the 129-residue chain is Small ribosomal subunit protein uS11 (129 aa).

It belongs to the universal ribosomal protein uS11 family. As to quaternary structure, part of the 30S ribosomal subunit. Interacts with proteins S7 and S18. Binds to IF-3.

In terms of biological role, located on the platform of the 30S subunit, it bridges several disparate RNA helices of the 16S rRNA. Forms part of the Shine-Dalgarno cleft in the 70S ribosome. The protein is Small ribosomal subunit protein uS11 of Mesorhizobium japonicum (strain LMG 29417 / CECT 9101 / MAFF 303099) (Mesorhizobium loti (strain MAFF 303099)).